We begin with the raw amino-acid sequence, 189 residues long: Thioredoxin-like protein CITRX, chloroplastic (189 aa).

A chloroplast-targeting transit peptide spans 1–56 (MAMAAAASLLPASAAPTLPGRAFRPPRNSTPTASLSCDGGSRCRGVGLGVILGGCR). One can recognise a Thioredoxin domain in the interval 72-189 (GSGKYIAPDY…MIRNIIDNEL (118 aa)). Active-site nucleophile residues include Cys-112 and Cys-115. Cys-112 and Cys-115 are joined by a disulfide.

The protein belongs to the thioredoxin family. Plant CITRX-type subfamily.

The protein localises to the plastid. It is found in the chloroplast. Functionally, probable thiol-disulfide oxidoreductase that may play a role in proper chloroplast development. The polypeptide is Thioredoxin-like protein CITRX, chloroplastic (Oryza sativa subsp. japonica (Rice)).